The primary structure comprises 507 residues: Arylsulfatase A (507 aa).

The first 18 residues, methionine 1–alanine 18, serve as a signal peptide directing secretion. Residues aspartate 29, aspartate 30, and cysteine 69 each coordinate Ca(2+). Cysteine 69 (nucleophile) is an active-site residue. 3-oxoalanine (Cys) is present on cysteine 69. Lysine 123 contacts substrate. Residue histidine 125 is part of the active site. Serine 150 is a substrate binding site. Disulfide bonds link cysteine 156–cysteine 172 and cysteine 161–cysteine 168. An N-linked (GlcNAc...) asparagine glycan is attached at asparagine 158. Asparagine 184 carries N-linked (GlcNAc...) asparagine glycosylation. Residue histidine 229 coordinates substrate. Ca(2+) is bound by residues aspartate 281 and asparagine 282. Cystine bridges form between cysteine 300–cysteine 414, cysteine 488–cysteine 500, cysteine 489–cysteine 502, and cysteine 493–cysteine 499. Lysine 302 contacts substrate. N-linked (GlcNAc...) asparagine glycosylation is present at asparagine 350.

The protein belongs to the sulfatase family. Homodimer at neutral pH and homooctamer at acidic pH. Exists both as a single chain of 58 kDa (component A) or as a chain of 50 kDa (component B) linked by disulfide bond(s) to a 7 kDa chain (component C). Interacts with SUMF1. It depends on Ca(2+) as a cofactor. Post-translationally, the conversion to 3-oxoalanine (also known as C-formylglycine, FGly), of a serine or cysteine residue in prokaryotes and of a cysteine residue in eukaryotes, is critical for catalytic activity. This post-translational modification is severely defective in multiple sulfatase deficiency (MSD).

The protein localises to the endoplasmic reticulum. It is found in the lysosome. It catalyses the reaction an N-acyl-1-beta-D-(3-O-sulfo)-galactosyl-sphing-4-enine + H2O = a beta-D-galactosyl-(1&lt;-&gt;1')-N-acylsphing-4-enine + sulfate + H(+). Hydrolyzes cerebroside sulfate. In Bos taurus (Bovine), this protein is Arylsulfatase A (ARSA).